The primary structure comprises 804 residues: Phosphatidylinositol 4-kinase beta (804 aa).

The region spanning 55-245 is the PIK helical domain; it reads LEKVKMIHGS…GTKLRKLILS (191 aa). Disordered regions lie at residues 69–122 and 251–309; these read LDKV…ARRR and AHKK…EPVR. Composition is skewed to polar residues over residues 91–103 and 281–300; these read KLTN…TSSR and DATV…SNPK. In terms of domain architecture, PI3K/PI4K catalytic spans 523 to 789; the sequence is EPWEEKVRRI…MVDGSMRSIT (267 aa). A G-loop region spans residues 529 to 535; sequence VRRIREG. A catalytic loop region spans residues 656–664; it reads QVKDRHNGN. Residues 675-699 form an activation loop region; it reads HIDFGFILSSSPRNLGFETSAFKLT.

It belongs to the PI3/PI4-kinase family. Type III PI4K subfamily. Mg(2+) serves as cofactor. The cofactor is Mn(2+).

The protein localises to the endomembrane system. The protein resides in the mitochondrion outer membrane. It is found in the rough endoplasmic reticulum membrane. The enzyme catalyses a 1,2-diacyl-sn-glycero-3-phospho-(1D-myo-inositol) + ATP = a 1,2-diacyl-sn-glycero-3-phospho-(1D-myo-inositol 4-phosphate) + ADP + H(+). Its function is as follows. Phosphorylates phosphatidylinositol (PI) in the first committed step in the production of the second messenger inositol-1,4,5,-trisphosphate (PIP). May play an important role in the inner ear development. This Xenopus laevis (African clawed frog) protein is Phosphatidylinositol 4-kinase beta (pi4kb).